The chain runs to 73 residues: uncharacterized protein (73 aa).

The signal sequence occupies residues Met-1 to Ile-28.

This is an uncharacterized protein from Bacillus subtilis (strain 168).